Here is a 302-residue protein sequence, read N- to C-terminus: Elongation factor Ts (302 aa).

Positions 80–83 (TDFV) are involved in Mg(2+) ion dislocation from EF-Tu.

This sequence belongs to the EF-Ts family.

It localises to the cytoplasm. Associates with the EF-Tu.GDP complex and induces the exchange of GDP to GTP. It remains bound to the aminoacyl-tRNA.EF-Tu.GTP complex up to the GTP hydrolysis stage on the ribosome. The sequence is that of Elongation factor Ts from Methylibium petroleiphilum (strain ATCC BAA-1232 / LMG 22953 / PM1).